A 1440-amino-acid polypeptide reads, in one-letter code: Glucose transporter type 1 (1440 aa).

The N-terminal stretch at 1–23 (MAFLCAPGLTFFLTYSIFSAVLG) is a signal peptide. Topologically, residues 24–67 (MLQFGYNTGVINAPEKNIENFMKDVYKDRYGEDISEEFIQQLYS) are cytoplasmic. The helical transmembrane segment at 68 to 88 (VAVSIFAIGGMLGGFSGGWMA) threads the bilayer. Over 89 to 95 (NRFGRKG) the chain is Extracellular. The helical transmembrane segment at 96-116 (GLLLNNVLGIAGACLMGFTKV) threads the bilayer. Residues 117–127 (SHSYEMLFLGR) are Cytoplasmic-facing. Residues 128 to 148 (FIIGVNCGLNTSLVPMYISEI) form a helical membrane-spanning segment. The Extracellular segment spans residues 149–162 (APLNLRGGLGTVNQ). Gln-162 contributes to the D-glucose binding site. Residues 163-183 (LAVTVGLLLSQVLGIEQILGT) form a helical membrane-spanning segment. Residues 184–186 (NEG) are Cytoplasmic-facing. Residues 187 to 207 (WPILLGLAICPAILQLILLPV) traverse the membrane as a helical segment. Residues 208 to 272 (CPESPRYLLI…LICSPTLRPP (65 aa)) are Extracellular-facing. A helical transmembrane segment spans residues 273-293 (LIIGIVMQLSQQFSGINAVFY). Residues 283–284 (QQ) and Asn-289 each bind D-glucose. Topologically, residues 294 to 310 (YSTSLFMSSGLTEESAK) are cytoplasmic. Residues 311–331 (FATIGIGAIMVVMTLVSIPLM) traverse the membrane as a helical segment. Residues 332-339 (DRTGRRTL) are Extracellular-facing. The helical transmembrane segment at 340-360 (HLYGLGGMFIFSIFITISFLI) threads the bilayer. The Cytoplasmic segment spans residues 361–372 (KEMIDWMSYLSV). The chain crosses the membrane as a helical span at residues 373 to 393 (VATLGFVVFFAVGPGSIPWMI). Trp-391 serves as a coordination point for D-glucose. Over 394-405 (TAELFSQGPRPS) the chain is Extracellular. The chain crosses the membrane as a helical span at residues 406–426 (AMAIAVLVNWMANFVVGIGFP). Over 427–429 (SMK) the chain is Cytoplasmic. The helical transmembrane segment at 430–450 (TALENYTFLPFSVFLAIFWIF) threads the bilayer. The Extracellular portion of the chain corresponds to 451 to 534 (TYKKVPETKN…GPYPLSDSTN (84 aa)). 2 N-linked (GlcNAc...) asparagine glycosylation sites follow: Asn-460 and Asn-480. The chain crosses the membrane as a helical span at residues 535 to 555 (LLGPGSSSYGPGGVLGLAGSG). Residues 556 to 1440 (SGLGGQCYTN…RKYTDFLRKK (885 aa)) are Cytoplasmic-facing. 6 disordered regions span residues 628-708 (ERFL…SRYA), 725-808 (QANP…HSVM), 966-987 (APEG…SELP), 1000-1083 (FLAD…GSYH), 1304-1330 (LEGA…PLTH), and 1380-1401 (ANSP…GHHV). Polar residues predominate over residues 669–678 (PPDSASVRST). A compositionally biased stretch (low complexity) spans 686–704 (QPQQVHHQQQQVHHQQQHQ). A compositionally biased stretch (pro residues) spans 730 to 739 (QAPPQQPAPP). Positions 754–789 (CQQRKHSHSPHHSRHTSPHSHHHHSHHSRHSRRSRR) are enriched in basic residues. The segment covering 1313–1330 (STTSEHSSSLPSPQPLTH) has biased composition (low complexity).

The protein belongs to the major facilitator superfamily. Sugar transporter (TC 2.A.1.1) family. Glucose transporter subfamily.

It is found in the membrane. Facilitative glucose transporter. The chain is Glucose transporter type 1 (Glut1) from Drosophila melanogaster (Fruit fly).